The following is a 72-amino-acid chain: Translation initiation factor IF-1 (72 aa).

In terms of domain architecture, S1-like spans 1–72 (MAKEDTLEFP…TKGRINYRFK (72 aa)).

This sequence belongs to the IF-1 family. Component of the 30S ribosomal translation pre-initiation complex which assembles on the 30S ribosome in the order IF-2 and IF-3, IF-1 and N-formylmethionyl-tRNA(fMet); mRNA recruitment can occur at any time during PIC assembly.

The protein resides in the cytoplasm. One of the essential components for the initiation of protein synthesis. Stabilizes the binding of IF-2 and IF-3 on the 30S subunit to which N-formylmethionyl-tRNA(fMet) subsequently binds. Helps modulate mRNA selection, yielding the 30S pre-initiation complex (PIC). Upon addition of the 50S ribosomal subunit IF-1, IF-2 and IF-3 are released leaving the mature 70S translation initiation complex. In Roseobacter denitrificans (strain ATCC 33942 / OCh 114) (Erythrobacter sp. (strain OCh 114)), this protein is Translation initiation factor IF-1.